The following is a 215-amino-acid chain: Charged multivesicular body protein 4 (215 aa).

Residues 10–173 (KQDTQETIGK…QEELDAQLLN (164 aa)) adopt a coiled-coil conformation.

The protein belongs to the SNF7 family. Probable core component of the endosomal sorting required for transport complex III (ESCRT-III). ESCRT-III components are thought to multimerize to form a flat lattice on the perimeter membrane of the endosome.

It localises to the cytoplasmic vesicle membrane. It is found in the late endosome membrane. Functionally, probable core component of the endosomal sorting required for transport complex III (ESCRT-III) which is involved in multivesicular bodies (MVBs) formation and sorting of endosomal cargo proteins into MVBs. MVBs contain intraluminal vesicles (ILVs) that are generated by invagination and scission from the limiting membrane of the endosome and mostly are delivered to lysosomes enabling degradation of membrane proteins. This chain is Charged multivesicular body protein 4 (chmp4), found in Dictyostelium discoideum (Social amoeba).